A 606-amino-acid chain; its full sequence is MNSNSSVQFNEQGVPVSTTFDDIYFSVESGVDESQYVFLAQNGLPRRWLSLPAHYSFTIAETGFGTGLNFLLTWKRFLEQAPANTRLHFVSFEKFPLSRQQLEQAYQLLEPIAEFSQSFLEHYPATDPGCHRIILSQGRVILDLWIGDLNELLPEWLPQAQKQIDAWFLDGFAPAKNPEMWQPTLFDAMKQTAHSGTTFATFTAAGSVKRALQQNGFEVQKVAGFGRKRDMLCGHYLSAEVCQKYYDRRDVTIIGGGISAACSALALKHRGVNVRVISAGSADGASGNPQGAVYPLLHAEYTPLSRFYWQAFSTATSFYRNFCDDHWFPVGVMQPAFNDDRARRYQRIADELYAPDTVRYLSQPEAEQEAGVSLAVPALLYPKAGWLRPAAVVKSLLETAQIELIEGEAKALEKTESGSWQISLKDGSLLAAERVLIATGHHINGLLPESVNPLPIQPVRGQVSLVQTTPLLSSLKTVLCFKGYLVPEDGNHHCVGASFNRDREDLEPTPEDDEENLKQLAENAKQPWAESLQLTSQRVSVRATSPDHQPVTGAVAENLYVITALGSRGFTSAPILAEVIACQLTGELTPLTQDALRRISVSRFKG.

Residues 1–237 form a tRNA (mnm(5)s(2)U34)-methyltransferase region; it reads MNSNSSVQFN…KRDMLCGHYL (237 aa). Residues 254 to 606 are FAD-dependent cmnm(5)s(2)U34 oxidoreductase; that stretch reads IGGGISAACS…RRISVSRFKG (353 aa).

In the N-terminal section; belongs to the methyltransferase superfamily. tRNA (mnm(5)s(2)U34)-methyltransferase family. The protein in the C-terminal section; belongs to the DAO family. Requires FAD as cofactor.

It is found in the cytoplasm. The enzyme catalyses 5-aminomethyl-2-thiouridine(34) in tRNA + S-adenosyl-L-methionine = 5-methylaminomethyl-2-thiouridine(34) in tRNA + S-adenosyl-L-homocysteine + H(+). Its function is as follows. Catalyzes the last two steps in the biosynthesis of 5-methylaminomethyl-2-thiouridine (mnm(5)s(2)U) at the wobble position (U34) in tRNA. Catalyzes the FAD-dependent demodification of cmnm(5)s(2)U34 to nm(5)s(2)U34, followed by the transfer of a methyl group from S-adenosyl-L-methionine to nm(5)s(2)U34, to form mnm(5)s(2)U34. This is tRNA 5-methylaminomethyl-2-thiouridine biosynthesis bifunctional protein MnmC from Idiomarina loihiensis (strain ATCC BAA-735 / DSM 15497 / L2-TR).